A 308-amino-acid polypeptide reads, in one-letter code: Oxygen-dependent coproporphyrinogen-III oxidase (308 aa).

Ser100 is a binding site for substrate. A divalent metal cation is bound by residues His104 and His114. His114 (proton donor) is an active-site residue. 116–118 (NFR) lines the substrate pocket. His153 and His183 together coordinate a divalent metal cation. The segment at 248-283 (YVEFNLVFDRGTIFGLQSGGRTESILSSMPPMATWK) is important for dimerization. 266-268 (GGR) provides a ligand contact to substrate.

The protein belongs to the aerobic coproporphyrinogen-III oxidase family. As to quaternary structure, homodimer. A divalent metal cation serves as cofactor.

The protein localises to the cytoplasm. The enzyme catalyses coproporphyrinogen III + O2 + 2 H(+) = protoporphyrinogen IX + 2 CO2 + 2 H2O. It functions in the pathway porphyrin-containing compound metabolism; protoporphyrin-IX biosynthesis; protoporphyrinogen-IX from coproporphyrinogen-III (O2 route): step 1/1. Functionally, involved in the heme biosynthesis. Catalyzes the aerobic oxidative decarboxylation of propionate groups of rings A and B of coproporphyrinogen-III to yield the vinyl groups in protoporphyrinogen-IX. The sequence is that of Oxygen-dependent coproporphyrinogen-III oxidase from Francisella tularensis subsp. holarctica (strain FTNF002-00 / FTA).